The primary structure comprises 170 residues: Adenine phosphoribosyltransferase (170 aa).

This sequence belongs to the purine/pyrimidine phosphoribosyltransferase family. Homodimer.

The protein resides in the cytoplasm. It carries out the reaction AMP + diphosphate = 5-phospho-alpha-D-ribose 1-diphosphate + adenine. It functions in the pathway purine metabolism; AMP biosynthesis via salvage pathway; AMP from adenine: step 1/1. Functionally, catalyzes a salvage reaction resulting in the formation of AMP, that is energically less costly than de novo synthesis. This is Adenine phosphoribosyltransferase from Thermotoga neapolitana (strain ATCC 49049 / DSM 4359 / NBRC 107923 / NS-E).